Reading from the N-terminus, the 762-residue chain is Protein PHTF1 (762 aa).

The region spanning 6 to 150 (RDAISWYQKK…VHCQIVSTQI (145 aa)) is the PHTF domain. The next 3 membrane-spanning stretches (helical) occupy residues 77 to 97 (GLVRVVFFPLFSNWWIQVTSL), 99 to 119 (IFVWLLLLYFMQVIAIVLYLM), and 121 to 141 (PIVNISEVLGPLCLMLLMGTV). Residues 152 to 184 (RPSGNNGNRRRRKLRKTVNGDGSRENGNNSSDK) form a disordered region. Residues Asn179 and Asn180 are each glycosylated (N-linked (GlcNAc...) asparagine). 5 positions are modified to phosphoserine: Ser272, Ser276, Ser277, Ser334, and Ser336. Disordered regions lie at residues 344–380 (SAAFSQGSRSGVSGGSRSLNMSRRDSESTRHDSETED) and 393–415 (RSSVTSDSEGAHVNTLHSGTKRD). Residues 348-361 (SQGSRSGVSGGSRS) are compositionally biased toward low complexity. N-linked (GlcNAc...) asparagine glycosylation occurs at Asn363. A compositionally biased stretch (basic and acidic residues) spans 365-376 (SRRDSESTRHDS). N-linked (GlcNAc...) asparagine glycosylation is present at Asn431. Helical transmembrane passes span 473-493 (GVGYQMLGNVVTIGLAFFPFL), 512-532 (EILTLFCGAPPVTPIIVLSII), 611-631 (VVVSSVFLLTLSIAFICCAQV), and 645-665 (WEFLIWETALLLFLLRLASLG). N-linked (GlcNAc...) asparagine glycans are attached at residues Asn674 and Asn733. The helical transmembrane segment at 737–757 (VVILSAVSGVISDLLGFNIRL) threads the bilayer.

Interacts with FEM1B. As to expression, widely expressed with highest levels in testis.

The protein resides in the endoplasmic reticulum membrane. It is found in the golgi apparatus. It localises to the cis-Golgi network membrane. The polypeptide is Protein PHTF1 (Homo sapiens (Human)).